A 341-amino-acid polypeptide reads, in one-letter code: Ferredoxin--NADP reductase 2 (341 aa).

The FAD site is built by aspartate 42, glutamine 50, tyrosine 55, isoleucine 95, phenylalanine 129, aspartate 294, and serine 335.

It belongs to the ferredoxin--NADP reductase type 2 family. As to quaternary structure, homodimer. Requires FAD as cofactor.

It catalyses the reaction 2 reduced [2Fe-2S]-[ferredoxin] + NADP(+) + H(+) = 2 oxidized [2Fe-2S]-[ferredoxin] + NADPH. In Chloroherpeton thalassium (strain ATCC 35110 / GB-78), this protein is Ferredoxin--NADP reductase 2.